The sequence spans 259 residues: Methanethiol S-methyltransferase 2 (259 aa).

5 helical membrane-spanning segments follow: residues 5 to 25 (LAIL…FLYA), 46 to 66 (LGEA…QHSV), 88 to 108 (TYVL…RPIP), 115 to 135 (SGIA…IAFA), and 182 to 202 (FLLA…FALA).

The protein belongs to the nurim family.

It localises to the membrane. The enzyme catalyses methanethiol + S-adenosyl-L-methionine = dimethyl sulfide + S-adenosyl-L-homocysteine + H(+). Its function is as follows. Catalyzes the methylation of methanethiol (MeSH) to yield dimethylsulphide (DMS). This Bradyrhizobium diazoefficiens (strain JCM 10833 / BCRC 13528 / IAM 13628 / NBRC 14792 / USDA 110) protein is Methanethiol S-methyltransferase 2.